We begin with the raw amino-acid sequence, 336 residues long: Phospho-N-acetylmuramoyl-pentapeptide-transferase (336 aa).

10 helical membrane-spanning segments follow: residues 1-21 (MLPL…SLFL), 56-76 (IPTA…LLLF), 78-98 (IQLW…ALGW), 124-144 (CLAA…FLSF), 148-168 (FLGI…FAIA), 184-204 (GLDG…LVVA), 210-230 (PWAF…LGFL), 239-259 (VFMG…CAVL), 264-284 (FLLL…IVQV), and 314-334 (VVRN…IAVF).

This sequence belongs to the glycosyltransferase 4 family. MraY subfamily. Mg(2+) is required as a cofactor.

It localises to the cell inner membrane. The enzyme catalyses UDP-N-acetyl-alpha-D-muramoyl-L-alanyl-gamma-D-glutamyl-meso-2,6-diaminopimeloyl-D-alanyl-D-alanine + di-trans,octa-cis-undecaprenyl phosphate = di-trans,octa-cis-undecaprenyl diphospho-N-acetyl-alpha-D-muramoyl-L-alanyl-D-glutamyl-meso-2,6-diaminopimeloyl-D-alanyl-D-alanine + UMP. The protein operates within cell wall biogenesis; peptidoglycan biosynthesis. In terms of biological role, catalyzes the initial step of the lipid cycle reactions in the biosynthesis of the cell wall peptidoglycan: transfers peptidoglycan precursor phospho-MurNAc-pentapeptide from UDP-MurNAc-pentapeptide onto the lipid carrier undecaprenyl phosphate, yielding undecaprenyl-pyrophosphoryl-MurNAc-pentapeptide, known as lipid I. This is Phospho-N-acetylmuramoyl-pentapeptide-transferase from Chlamydia trachomatis serovar L2b (strain UCH-1/proctitis).